The following is a 682-amino-acid chain: MSRKQLALLEPTLVRQALLDAVKKLSPMVQWRNPVMFIVWVGSLLTTLLAIAMAGGALTGSATFTAAVSIWLWFTVLFANFAEAMAEGRSKAQANSLKGVKKTAFARKLRAPQHDAPVDHVPAEDLRKGDVVLVEAGDIIPCDGEVIEGGASVDESAITGESAPVIRESGGDFASVTGGTRILSDWLVIRCSVNPGETFLDRMIAMVEGAQRRKTPNEIALTILLIALTLVFLLATATIWPFSAWSGNAVSVTVLVALLVCLIPTTIGGLLSAIGVAGMSRMLGANVIATSGRAVEAAGDVDVLLLDKTGTITLGNRQASAFLPARGVEERTLADAAQLSSLADETPEGRSIVVLAKQRFNLRERDLQSLHATFVPFTAQTRMSGINIDQRMIRKGSVDAIRRHVEANGGHFPADVDKQVEEVARQGATPLVVAEGEKVLGIIALKDIVKGGIKERFAQLRKMGIKTVMITGDNRLTAAAIAAEAGVDDFLAEATPEAKLALIRQYQSEGRLVAMTGDGTNDAPALAQADVAVAMNSGTQAAKEAGNMVDLDSNPTKLIEVVHIGKQMLMTRGSLTTFSIANDVAKYFAIIPAAFAAVYPQLAMLNVMGLHSPSSAILSAVIFNALIIVFLIPLALKGVSYRPLSASAMLRRNLWIYGLGGLLVPFIGIKAIDLLLTLSGLV.

4 helical membrane-spanning segments follow: residues Val-35–Gly-55, Ala-62–Ala-82, Ile-219–Ile-239, and Val-254–Ile-274. Asp-307 (4-aspartylphosphate intermediate) is an active-site residue. Residues Asp-344, Glu-348, Phe-377 to Ser-384, and Lys-395 each bind ATP. Mg(2+)-binding residues include Asp-518 and Asp-522. The next 3 membrane-spanning stretches (helical) occupy residues Phe-588 to Met-608, Ala-616 to Leu-636, and Ile-656 to Leu-676.

Belongs to the cation transport ATPase (P-type) (TC 3.A.3) family. Type IA subfamily. The system is composed of three essential subunits: KdpA, KdpB and KdpC.

Its subcellular location is the cell inner membrane. The catalysed reaction is K(+)(out) + ATP + H2O = K(+)(in) + ADP + phosphate + H(+). Its function is as follows. Part of the high-affinity ATP-driven potassium transport (or Kdp) system, which catalyzes the hydrolysis of ATP coupled with the electrogenic transport of potassium into the cytoplasm. This subunit is responsible for energy coupling to the transport system and for the release of the potassium ions to the cytoplasm. This Klebsiella pneumoniae subsp. pneumoniae (strain ATCC 700721 / MGH 78578) protein is Potassium-transporting ATPase ATP-binding subunit.